Consider the following 595-residue polypeptide: Flap endonuclease 1 (595 aa).

Residues 1–106 (MGIKGLTKFI…SELEKRGEKR (106 aa)) are N-domain. Asp34 contacts Mg(2+). The DNA site is built by Arg47 and Arg72. Mg(2+)-binding residues include Asp88, Glu160, Glu162, Asp181, and Asp183. The I-domain stretch occupies residues 124-267 (EIKKQSGRTV…KTAYNLIKEY (144 aa)). Glu160 is a binding site for DNA. The DNA site is built by Gly245 and Asp247. Asp247 serves as a coordination point for Mg(2+). An interaction with PCNA region spans residues 350–358 (TQRRLDNFF). A disordered region spans residues 370–493 (NEESQIKKEV…TGDVYSFPNG (124 aa)). The span at 392–401 (NDSSTKLNSK) shows a compositional bias: polar residues. Residues 406–425 (PKGEKESKTEKDDGDTHNGN) show a composition bias toward basic and acidic residues. Residues 426–436 (DNEEEGGEGET) show a composition bias toward acidic residues. A compositionally biased stretch (basic and acidic residues) spans 461 to 475 (HKSDSESGNVKKEST).

This sequence belongs to the XPG/RAD2 endonuclease family. FEN1 subfamily. As to quaternary structure, interacts with PCNA. Three molecules of FEN1 bind to one PCNA trimer with each molecule binding to one PCNA monomer. PCNA stimulates the nuclease activity without altering cleavage specificity. Mg(2+) is required as a cofactor. Phosphorylated. Phosphorylation upon DNA damage induces relocalization to the nuclear plasma.

Its subcellular location is the nucleus. The protein resides in the nucleolus. It localises to the nucleoplasm. The protein localises to the mitochondrion. In terms of biological role, structure-specific nuclease with 5'-flap endonuclease and 5'-3' exonuclease activities involved in DNA replication and repair. During DNA replication, cleaves the 5'-overhanging flap structure that is generated by displacement synthesis when DNA polymerase encounters the 5'-end of a downstream Okazaki fragment. It enters the flap from the 5'-end and then tracks to cleave the flap base, leaving a nick for ligation. Also involved in the long patch base excision repair (LP-BER) pathway, by cleaving within the apurinic/apyrimidinic (AP) site-terminated flap. Acts as a genome stabilization factor that prevents flaps from equilibrating into structures that lead to duplications and deletions. Also possesses 5'-3' exonuclease activity on nicked or gapped double-stranded DNA, and exhibits RNase H activity. Also involved in replication and repair of rDNA and in repairing mitochondrial DNA. This Plasmodium knowlesi (strain H) protein is Flap endonuclease 1.